Consider the following 132-residue polypeptide: Small ribosomal subunit protein uS8c (132 aa).

Belongs to the universal ribosomal protein uS8 family. Part of the 30S ribosomal subunit.

Its subcellular location is the plastid. The protein localises to the chloroplast. In terms of biological role, one of the primary rRNA binding proteins, it binds directly to 16S rRNA central domain where it helps coordinate assembly of the platform of the 30S subunit. This is Small ribosomal subunit protein uS8c (rps8) from Staurastrum punctulatum (Green alga).